We begin with the raw amino-acid sequence, 893 residues long: UPF0182 protein CLI_0022 (893 aa).

Helical transmembrane passes span 9-29 (IPLF…NFII), 49-69 (AIII…WMYY), 94-114 (LFFI…SSSY), 154-174 (VIIS…FILE), 202-222 (LAIV…IKIW), 246-266 (FYKI…LSIV), and 273-293 (VSIC…ASFL).

Belongs to the UPF0182 family.

It is found in the cell membrane. In Clostridium botulinum (strain Langeland / NCTC 10281 / Type F), this protein is UPF0182 protein CLI_0022.